The following is a 502-amino-acid chain: High affinity nitrate transporter 2.5 (502 aa).

12 consecutive transmembrane segments (helical) span residues 51 to 71 (WFQFFCCFVSTFAAPPLLPVI), 87 to 107 (IASVSGAVFARIVMGTACDLF), 111 to 131 (LASAALTLSTAPAVYFTAGIK), 133 to 153 (PIGFIMVRFFAGFSLATFVST), 172 to 192 (IAAGWGNLGGGATQLIMPIVF), 208 to 228 (IAFFIPGLFQTLSAFAVLLFG), 264 to 284 (WITALAYGYCFGVELTIDNII), 300 to 320 (GIIAASFGLANFFARPGGGIF), 334 to 354 (LWAWWIVQTSGGVLCACLGQI), 361 to 381 (IIVMLVFSVFVQAACGLTFGV), 393 to 413 (VSGMTGAGGNVGAVLTQLIFF), and 423 to 443 (GITLMGVMSIACSLPICLIYF). Residues 477-502 (LHIGSQKFAETSISERGRATTTHPQT) are disordered.

The protein belongs to the major facilitator superfamily. Nitrate/nitrite porter (TC 2.A.1.8) family. As to quaternary structure, oligomeric molecular complex with NRT3.1. As to expression, expressed in roots, shoots and seeds. Expressed in leaves. Expressed in root hair zone of the primary root and the lateral roots, but not in the lateral root tip or in older parts of the roots. Detected mainly in the epidermis and the cortex. Expressed in shoots only in higher-order veins.

It localises to the cell membrane. In terms of biological role, nitrate transporter involved in the constitutive high-affinity transport system (cHATS) under long-term N starvation conditions. Predominantly expressed in roots of nitrate-deprived plants as a 150 kDa molecular complex with NRT3.1 representing the major contributor to cHATS influx. The principal role of this cHATS is to enable roots previously deprived of nitrate to absorb this ion and initiate induction of nitrate-inducible genes. Not involved in transfer of nitrate from roots to shoots. Contributes to phloem loading of nitrate in shoots during N starvation, but not required for growth and nitrate uptake in young plants. Required for the nitrate uptake-independent plant growth promotion and lateral root response to the rhizospheric Phyllobacterium. Might be involved in the transfer of nitrate from stored pools to cytoplasm. The protein is High affinity nitrate transporter 2.5 (NRT2.5) of Arabidopsis thaliana (Mouse-ear cress).